The primary structure comprises 426 residues: MSSLLLNKEIFSKSISIVGLKVNKTLLKTLAQEFKGYLLIRDRVKHIVDDSDSKDKKLVLLSESIENGNVGAYGVNKQLPDNLQSFLKTHSIEVVKHQVQLNYNNFSYEEVMKELIPTGLPIPHAFEKIGHIAHLNLKEELLPYKNMIGQVILDKKGPQIRTVLNKVGKIDTVFRTFNFELLAGDNDLLAQVVYWNSRLQFEHSNLIQTFKSHDIVVDMFAGVGPFAVPASKLVKCKVYANDLNPNSVKYMRENATRNKASTIEISNLDARDFVRELVSRDPPVAFTQAIMNLPSTSIEFLDVFREIFLNPEKAPPIPAPTIHCYTFTPVSETAGGDLKELTIKNVEAIIKHPLPADTTVYEVRDVSPNKRMMRISFKMPTLKKRKDTENNDDQENNNNSSNNNNNNKIDYNEAVSSGGEGKKIKH.

S-adenosyl-L-methionine is bound by residues histidine 203, 242–243 (DL), 269–270 (DA), and asparagine 292. The disordered stretch occupies residues 374-426 (RISFKMPTLKKRKDTENNDDQENNNNSSNNNNNNKIDYNEAVSSGGEGKKIKH). Residues 396 to 407 (NNNNSSNNNNNN) show a composition bias toward low complexity.

This sequence belongs to the class I-like SAM-binding methyltransferase superfamily. TRM5/TYW2 family. As to quaternary structure, monomer.

The protein resides in the mitochondrion matrix. It is found in the nucleus. Its subcellular location is the cytoplasm. The catalysed reaction is guanosine(37) in tRNA + S-adenosyl-L-methionine = N(1)-methylguanosine(37) in tRNA + S-adenosyl-L-homocysteine + H(+). Its function is as follows. Specifically methylates the N1 position of guanosine-37 in various cytoplasmic and mitochondrial tRNAs. Methylation is not dependent on the nature of the nucleoside 5' of the target nucleoside. This is the first step in the biosynthesis of wybutosine (yW), a modified base adjacent to the anticodon of tRNAs and required for accurate decoding. This Heterostelium pallidum (strain ATCC 26659 / Pp 5 / PN500) (Cellular slime mold) protein is tRNA (guanine(37)-N(1))-methyltransferase (trmt5).